Here is a 76-residue protein sequence, read N- to C-terminus: Large ribosomal subunit protein eL20 (76 aa).

It belongs to the eukaryotic ribosomal protein eL20 family. Part of the 50S ribosomal subunit. Binds 23S rRNA.

The chain is Large ribosomal subunit protein eL20 from Methanococcus maripaludis (strain C6 / ATCC BAA-1332).